Consider the following 186-residue polypeptide: Ribosome-recycling factor (186 aa).

Belongs to the RRF family.

The protein localises to the cytoplasm. Functionally, responsible for the release of ribosomes from messenger RNA at the termination of protein biosynthesis. May increase the efficiency of translation by recycling ribosomes from one round of translation to another. The chain is Ribosome-recycling factor from Leptothrix cholodnii (strain ATCC 51168 / LMG 8142 / SP-6) (Leptothrix discophora (strain SP-6)).